We begin with the raw amino-acid sequence, 82 residues long: Cytochrome c-551 (82 aa).

C12, C15, H16, and M61 together coordinate heme c.

In terms of processing, binds 1 heme c group covalently per subunit.

The polypeptide is Cytochrome c-551 (Azotobacter vinelandii).